We begin with the raw amino-acid sequence, 220 residues long: Probable GTP-binding protein EngB (220 aa).

The EngB-type G domain maps to 26 to 200 (EGIEIAFAGR…RAKLDEWYAP (175 aa)). GTP-binding positions include 34–41 (GRSNAGKS), 61–65 (GRTQL), 79–82 (DLPG), 146–149 (TKAD), and 179–181 (FSS). Residues Ser41 and Thr63 each contribute to the Mg(2+) site.

It belongs to the TRAFAC class TrmE-Era-EngA-EngB-Septin-like GTPase superfamily. EngB GTPase family. Requires Mg(2+) as cofactor.

In terms of biological role, necessary for normal cell division and for the maintenance of normal septation. This Vibrio cholerae serotype O1 (strain ATCC 39315 / El Tor Inaba N16961) protein is Probable GTP-binding protein EngB.